The following is a 376-amino-acid chain: Flagellar P-ring protein 2 (376 aa).

Residues 1-19 (MTRLLLALILVVSAASAQA) form the signal peptide.

This sequence belongs to the FlgI family. In terms of assembly, the basal body constitutes a major portion of the flagellar organelle and consists of four rings (L,P,S, and M) mounted on a central rod.

The protein localises to the periplasm. It is found in the bacterial flagellum basal body. Its function is as follows. Assembles around the rod to form the L-ring and probably protects the motor/basal body from shearing forces during rotation. The protein is Flagellar P-ring protein 2 of Bradyrhizobium diazoefficiens (strain JCM 10833 / BCRC 13528 / IAM 13628 / NBRC 14792 / USDA 110).